The sequence spans 634 residues: Heat shock 70-related protein 1, mitochondrial (634 aa).

A mitochondrion-targeting transit peptide spans 1-20 (MFARRVCGSAAASAACLARH). The stretch at 538–614 (SEQHAEADRV…AAATDKLQKA (77 aa)) forms a coiled coil.

It belongs to the heat shock protein 70 family.

The protein localises to the mitochondrion. This chain is Heat shock 70-related protein 1, mitochondrial (HSP70.1), found in Leishmania major.